The sequence spans 100 residues: Large ribosomal subunit protein bL21 (100 aa).

The protein belongs to the bacterial ribosomal protein bL21 family. Part of the 50S ribosomal subunit. Contacts protein L20.

Its function is as follows. This protein binds to 23S rRNA in the presence of protein L20. In Wolbachia pipientis subsp. Culex pipiens (strain wPip), this protein is Large ribosomal subunit protein bL21.